The chain runs to 402 residues: uncharacterized protein (402 aa).

The first 44 residues, 1–44, serve as a signal peptide directing secretion; sequence MLEKNLLPEILLAIHMPLNKGLTRVKAIVIIIVVIIAVIAGVVG. Positions 53 to 79 are disordered; it reads NSVTTSSSSTTTSSSLSSTSISSSTTN.

Belongs to the bacterial solute-binding protein 1 family. WtpA subfamily.

This is an uncharacterized protein from Saccharolobus solfataricus (strain ATCC 35092 / DSM 1617 / JCM 11322 / P2) (Sulfolobus solfataricus).